Reading from the N-terminus, the 281-residue chain is MELYAASHSLPNYPSSFLFKPKITTFHTTLFPTKFAPFKASFFSPNHLTLTTPMNPPTTSLSSAAFVEHNNGSTSTSLPFHPETRVGEVKRVTKETNVSVKINLDGSGVADSSTGIPFLDHMLDQLASHGLFDVHVKATGDVHIDDHHTNEDVALAIGTALLQALGDRKGINRFGDFSAPLDEALIHVSLDLSGRPHLSYNLDIPTQRVGTYDTQVVEHFLQSIVNTSGMTLHIRQLAGRNSHHIIEATFKAFARALRQATEYDPRRRGSVPSSKGVLSRS.

A chloroplast-targeting transit peptide spans 1-85 (MELYAASHSL…TSLPFHPETR (85 aa)). Residues E95, 121–129 (HMLDQLASH), 147–151 (HHTNE), R173, and R195 contribute to the substrate site. Residues H121, H147, H148, and E151 each coordinate Mn(2+). Residues H219, H243, H244, and E247 each coordinate Mn(2+). Residues 243–251 (HHIIEATFK) and 273–275 (SSK) contribute to the substrate site.

The protein belongs to the imidazoleglycerol-phosphate dehydratase family. Mn(2+) is required as a cofactor.

The protein resides in the plastid. The protein localises to the chloroplast. The catalysed reaction is D-erythro-1-(imidazol-4-yl)glycerol 3-phosphate = 3-(imidazol-4-yl)-2-oxopropyl phosphate + H2O. It functions in the pathway amino-acid biosynthesis; L-histidine biosynthesis; L-histidine from 5-phospho-alpha-D-ribose 1-diphosphate: step 6/9. In Pisum sativum (Garden pea), this protein is Imidazoleglycerol-phosphate dehydratase, chloroplastic.